Reading from the N-terminus, the 274-residue chain is Copper chaperone for superoxide dismutase (274 aa).

The HMA domain maps to 11 to 74; the sequence is LCTLEFAVQM…LLEGTGRQAV (64 aa). Residues Cys22 and Cys25 each coordinate Cu cation. Residue Lys76 forms a Glycyl lysine isopeptide (Lys-Gly) (interchain with G-Cter in ubiquitin) linkage. Residues 88-234 form a superoxide dismutase-like region; sequence AAVAILGGPG…LACGIIARSA (147 aa). A disulfide bond links Cys141 and Cys227. Residues His147, His155, His164, and Asp167 each coordinate Zn(2+). Glycyl lysine isopeptide (Lys-Gly) (interchain with G-Cter in ubiquitin) cross-links involve residues Lys189, Lys216, and Lys241. Cu cation contacts are provided by Cys244 and Cys246. At Ser267 the chain carries Phosphoserine.

In the C-terminal section; belongs to the Cu-Zn superoxide dismutase family. In terms of assembly, homodimer, and heterodimer with SOD1. Interacts with COMMD1. Interacts with XIAP/BIRC4. Interacts with SLC31A1(via C-terminal domain); this interaction is Cu(1+)-mediated. The heterodimer CCS:SOD1 interacts with SLC31A1; this heterotrimer is Cu(1+)-mediated and its maintenance is regulated through SOD1 activation. Cu(2+) is required as a cofactor. It depends on Zn(2+) as a cofactor. Post-translationally, ubiquitinion by XIAP/BIRC4 leads to enhancement of its chaperone activity toward its physiologic target, SOD1, rather than proteasomal degradation. XIAP/BIRC4 preferentially ubiquitinates at Lys-241. Ubiquitous.

The protein resides in the cytoplasm. In terms of biological role, delivers copper to copper zinc superoxide dismutase (SOD1). In Homo sapiens (Human), this protein is Copper chaperone for superoxide dismutase.